Reading from the N-terminus, the 236-residue chain is 28 kDa antigen (236 aa).

An N-terminal signal peptide occupies residues 1–22 (MPNRRRCKLSTAISTVATLAIA). Residues 76 to 105 (PVPSLTGTDDPGNGLRTPGLTSPDLTNQEL) are disordered. Residues 94 to 105 (GLTSPDLTNQEL) are compositionally biased toward polar residues.

To M.tuberculosis ERP.

The sequence is that of 28 kDa antigen from Mycobacterium leprae (strain TN).